Reading from the N-terminus, the 115-residue chain is Transmembrane protein 218 (115 aa).

The next 3 membrane-spanning stretches (helical) occupy residues 5–25, 38–58, and 81–101; these read VLGVGAGVFLLALIWVLVLLL, FSIVFVFLGALIITTVLLLFP, and YVLLAFLSAVFLGGLFLLLTH.

Belongs to the TMEM218 family. Interacts with TMEM67.

Its subcellular location is the membrane. The protein resides in the cell projection. The protein localises to the cilium. In terms of biological role, may be involved in ciliary biogenesis or function. This is Transmembrane protein 218 (Tmem218) from Mus musculus (Mouse).